Here is a 373-residue protein sequence, read N- to C-terminus: UDP-N-acetylglucosamine--N-acetylmuramyl-(pentapeptide) pyrophosphoryl-undecaprenol N-acetylglucosamine transferase (373 aa).

UDP-N-acetyl-alpha-D-glucosamine contacts are provided by residues 10–12, N124, R166, S196, and Q301; that span reads TGG.

It belongs to the glycosyltransferase 28 family. MurG subfamily.

Its subcellular location is the cell membrane. It carries out the reaction di-trans,octa-cis-undecaprenyl diphospho-N-acetyl-alpha-D-muramoyl-L-alanyl-D-glutamyl-meso-2,6-diaminopimeloyl-D-alanyl-D-alanine + UDP-N-acetyl-alpha-D-glucosamine = di-trans,octa-cis-undecaprenyl diphospho-[N-acetyl-alpha-D-glucosaminyl-(1-&gt;4)]-N-acetyl-alpha-D-muramoyl-L-alanyl-D-glutamyl-meso-2,6-diaminopimeloyl-D-alanyl-D-alanine + UDP + H(+). The protein operates within cell wall biogenesis; peptidoglycan biosynthesis. In terms of biological role, cell wall formation. Catalyzes the transfer of a GlcNAc subunit on undecaprenyl-pyrophosphoryl-MurNAc-pentapeptide (lipid intermediate I) to form undecaprenyl-pyrophosphoryl-MurNAc-(pentapeptide)GlcNAc (lipid intermediate II). In Desulforudis audaxviator (strain MP104C), this protein is UDP-N-acetylglucosamine--N-acetylmuramyl-(pentapeptide) pyrophosphoryl-undecaprenol N-acetylglucosamine transferase.